Here is a 179-residue protein sequence, read N- to C-terminus: Proteasome chaperone 3 (179 aa).

Belongs to the PSMG3 family. In terms of assembly, component of the 20S proteasome chaperone. Forms a heterodimer with POC4 that binds to proteasome precursors. Interacts with POP2.

In terms of biological role, involved in 20S proteasome assembly, facilitating the alpha-ring formation. In Saccharomyces cerevisiae (strain ATCC 204508 / S288c) (Baker's yeast), this protein is Proteasome chaperone 3 (IRC25).